An 86-amino-acid polypeptide reads, in one-letter code: Small ribosomal subunit protein bS16 (86 aa).

Belongs to the bacterial ribosomal protein bS16 family.

In Borrelia garinii subsp. bavariensis (strain ATCC BAA-2496 / DSM 23469 / PBi) (Borreliella bavariensis), this protein is Small ribosomal subunit protein bS16.